A 507-amino-acid polypeptide reads, in one-letter code: ATP synthase subunit alpha (507 aa).

ATP is bound at residue 168 to 175; that stretch reads GDRQTGKT.

Belongs to the ATPase alpha/beta chains family. F-type ATPases have 2 components, CF(1) - the catalytic core - and CF(0) - the membrane proton channel. CF(1) has five subunits: alpha(3), beta(3), gamma(1), delta(1), epsilon(1). CF(0) has three main subunits: a(1), b(2) and c(9-12). The alpha and beta chains form an alternating ring which encloses part of the gamma chain. CF(1) is attached to CF(0) by a central stalk formed by the gamma and epsilon chains, while a peripheral stalk is formed by the delta and b chains.

It is found in the cell membrane. The catalysed reaction is ATP + H2O + 4 H(+)(in) = ADP + phosphate + 5 H(+)(out). Produces ATP from ADP in the presence of a proton gradient across the membrane. The alpha chain is a regulatory subunit. In Mesomycoplasma hyopneumoniae (strain 7448) (Mycoplasma hyopneumoniae), this protein is ATP synthase subunit alpha.